The primary structure comprises 836 residues: Protein O-mannosyl-transferase tmtc2 (836 aa).

The chain crosses the membrane as a helical span at residues 1–21 (MIAELLSSALGLLLYLNTLGA). Topologically, residues 22–77 (DFCYDDSRAIKTNQDLLPETPWNHIFFNDFWGTLLTHSGSHKSYRPLCTLSFRLNY) are extracellular. A helical membrane pass occupies residues 78-98 (LFGGLDPWNYHLVNVLLHSAV). Topologically, residues 99-107 (TGLFTNLCK) are cytoplasmic. A helical transmembrane segment spans residues 108 to 128 (ALFGSGCWTLIAGLLFASHPI). Residues 129–132 (HTEA) are Extracellular-facing. Residues 133 to 153 (VSGIVGRADVGSGLFFLLSLL) traverse the membrane as a helical segment. Residues 154 to 164 (CYMKHCSTRGY) lie on the Cytoplasmic side of the membrane. Residues 165–185 (SLSSWCWILCAGFWAACSMLW) form a helical membrane-spanning segment. Residues 186-188 (KEQ) lie on the Extracellular side of the membrane. The chain crosses the membrane as a helical span at residues 189–209 (GVTVLAVSAVYDVFVFHKLKM). Residues 210–220 (NQIISVVFKEK) lie on the Cytoplasmic side of the membrane. A helical transmembrane segment spans residues 221 to 241 (NVSFFFSVGLLFAWGVILLGA). Residues 242–312 (RFYWMGNTPP…KTITDWRNIH (71 aa)) lie on the Extracellular side of the membrane. The helical transmembrane segment at 313-333 (TVAFYILLILLAYSSLKGSAI) threads the bilayer. At 334–392 (KRDCNGKVFMNGKQNTNGHSCQSDLEHKNAEQNPVIASKLENGVKHHNSHEMQLPSTEN) the chain is on the cytoplasmic side. Residues 393-413 (IVVLALSLLIVPFVPASNLFF) traverse the membrane as a helical segment. A topological domain (extracellular) is located at residue Y414. Residues 415–435 (VGFVIAERVLYIPSMGFCLLV) traverse the membrane as a helical segment. Topologically, residues 436–449 (TVGARALYIKAQKN) are cytoplasmic. Residues 450–470 (ILKNLLFYATAALIVFYGLKT) form a helical membrane-spanning segment. The Extracellular portion of the chain corresponds to 471–836 (VVRNGDWKNE…EKQGLKNSKT (366 aa)). 9 TPR repeats span residues 493 to 526 (AKAW…RSNM), 527 to 560 (ADML…RPTL), 561 to 594 (ASGY…PDEN), 606 to 639 (TSCL…MPRQ), 643 to 676 (QSLY…KPDH), 677 to 710 (IPAH…DPNK), 711 to 744 (GNCY…DSSE), 745 to 778 (FDVV…RQNY), and 779 to 812 (PAAL…KPDD).

This sequence belongs to the TMTC family.

It is found in the membrane. Its subcellular location is the endoplasmic reticulum. It carries out the reaction a di-trans,poly-cis-dolichyl beta-D-mannosyl phosphate + L-seryl-[protein] = 3-O-(alpha-D-mannosyl)-L-seryl-[protein] + a di-trans,poly-cis-dolichyl phosphate + H(+). It catalyses the reaction a di-trans,poly-cis-dolichyl beta-D-mannosyl phosphate + L-threonyl-[protein] = 3-O-(alpha-D-mannosyl)-L-threonyl-[protein] + a di-trans,poly-cis-dolichyl phosphate + H(+). It functions in the pathway protein modification; protein glycosylation. Its function is as follows. Transfers mannosyl residues to the hydroxyl group of serine or threonine residues. The chain is Protein O-mannosyl-transferase tmtc2 (tmtc2) from Xenopus laevis (African clawed frog).